Here is a 535-residue protein sequence, read N- to C-terminus: Probable bifunctional tRNA threonylcarbamoyladenosine biosynthesis protein (535 aa).

The kae1 stretch occupies residues 1–323; sequence MICLGLEGTA…YRTDMVEVNW (323 aa). Fe cation contacts are provided by His106, His110, and Tyr127. L-threonylcarbamoyladenylate-binding positions include 127 to 131, Asp159, Gly172, Glu176, and Asn256; that span reads YVSGG. Asp284 contributes to the Fe cation binding site. The region spanning 333-535 is the Protein kinase domain; the sequence is KIPEHLIGKG…DVERRARYVE (203 aa). ATP is bound by residues 339-347 and Lys360; that span reads IGKGAEADI. Asp451 (proton acceptor; for kinase activity) is an active-site residue.

This sequence in the N-terminal section; belongs to the KAE1 / TsaD family. The protein in the C-terminal section; belongs to the protein kinase superfamily. Tyr protein kinase family. BUD32 subfamily. Component of the KEOPS complex that consists of Kae1, Bud32, Cgi121 and Pcc1; the whole complex dimerizes. The cofactor is Fe(2+).

The protein localises to the cytoplasm. The catalysed reaction is L-seryl-[protein] + ATP = O-phospho-L-seryl-[protein] + ADP + H(+). The enzyme catalyses L-threonyl-[protein] + ATP = O-phospho-L-threonyl-[protein] + ADP + H(+). It carries out the reaction L-threonylcarbamoyladenylate + adenosine(37) in tRNA = N(6)-L-threonylcarbamoyladenosine(37) in tRNA + AMP + H(+). With respect to regulation, activity provided by the Kae1 region seems to be regulated via phosphorylation by the protein kinase Bud32, which is itself activated by Cgi121. Its function is as follows. Required for the formation of a threonylcarbamoyl group on adenosine at position 37 (t(6)A37) in tRNAs that read codons beginning with adenine. Is a component of the KEOPS complex that is probably involved in the transfer of the threonylcarbamoyl moiety of threonylcarbamoyl-AMP (TC-AMP) to the N6 group of A37. The Kae1 domain likely plays a direct catalytic role in this reaction. The Bud32 domain probably displays kinase activity that regulates Kae1 function. In vitro, exhibits low ATPase activity, but does not bind DNA and does not have endonuclease activity. This is Probable bifunctional tRNA threonylcarbamoyladenosine biosynthesis protein from Methanocaldococcus jannaschii (strain ATCC 43067 / DSM 2661 / JAL-1 / JCM 10045 / NBRC 100440) (Methanococcus jannaschii).